Here is a 90-residue protein sequence, read N- to C-terminus: Probable Fe(2+)-trafficking protein (90 aa).

The protein belongs to the Fe(2+)-trafficking protein family.

Could be a mediator in iron transactions between iron acquisition and iron-requiring processes, such as synthesis and/or repair of Fe-S clusters in biosynthetic enzymes. The sequence is that of Probable Fe(2+)-trafficking protein from Marinobacter nauticus (strain ATCC 700491 / DSM 11845 / VT8) (Marinobacter aquaeolei).